The primary structure comprises 520 residues: Cytochrome P450 monooxygenase vrtE (520 aa).

Residues 16 to 36 traverse the membrane as a helical segment; that stretch reads ALSLLHYVLGAIFLLLLFHML. Residue Asn-137 is glycosylated (N-linked (GlcNAc...) asparagine). Position 459 (Cys-459) interacts with heme.

It belongs to the cytochrome P450 family. It depends on heme as a cofactor.

It is found in the membrane. The protein operates within secondary metabolite biosynthesis; terpenoid biosynthesis. Functionally, cytochrome P450 monooxygenase; part of the gene cluster that mediates the biosynthesis of viridicatumtoxin, a tetracycline-like fungal meroterpenoid with a unique, fused spirobicyclic ring system. The first step of the pathway is the production of the malonamoyl-CoA starter unit for the polyketide synthase vrtA. The aldolase vrtJ may be involved in the synthesis of the malonamate substrate for malonamoyl-CoA synthetase vrtB. The polyketide synthase vrtA then may utilize the malonamoyl-CoA starter unit, followed by sequential condensation of eight malonyl-CoA units to form the polyketide backbone. The cyclization of the last ring could be mediated by the lactamase-like protein vrtG. The proposed post-PKS tailoring steps are a hydroxylation at C5 catalyzed the cytochrome P450 monooxygenase vrtE, a hydroxylation at C12a catalyzed by VrtH and/or VrtI, and an O-methylation by the O-methyltransferase vrtF. VrtC is then proposed to catalyze the transfer of a geranyl group synthesized by vrtD to the aromatic C ring of the tetracyclic polyketide intermediate of viridicatumtoxin to yield previridicatumtoxin. Finally, the cytochrome P450 monooxygenase vrtK catalyzes the spirocyclization of the geranyl moiety of previridicatumtoxin to afford viridicatumtoxin. The protein is Cytochrome P450 monooxygenase vrtE of Penicillium aethiopicum.